We begin with the raw amino-acid sequence, 364 residues long: Aminomethyltransferase (364 aa).

It belongs to the GcvT family. As to quaternary structure, the glycine cleavage system is composed of four proteins: P, T, L and H.

The enzyme catalyses N(6)-[(R)-S(8)-aminomethyldihydrolipoyl]-L-lysyl-[protein] + (6S)-5,6,7,8-tetrahydrofolate = N(6)-[(R)-dihydrolipoyl]-L-lysyl-[protein] + (6R)-5,10-methylene-5,6,7,8-tetrahydrofolate + NH4(+). In terms of biological role, the glycine cleavage system catalyzes the degradation of glycine. This chain is Aminomethyltransferase, found in Salmonella paratyphi C (strain RKS4594).